The chain runs to 196 residues: Imidazoleglycerol-phosphate dehydratase (196 aa).

The protein belongs to the imidazoleglycerol-phosphate dehydratase family.

The protein localises to the cytoplasm. The enzyme catalyses D-erythro-1-(imidazol-4-yl)glycerol 3-phosphate = 3-(imidazol-4-yl)-2-oxopropyl phosphate + H2O. The protein operates within amino-acid biosynthesis; L-histidine biosynthesis; L-histidine from 5-phospho-alpha-D-ribose 1-diphosphate: step 6/9. The protein is Imidazoleglycerol-phosphate dehydratase of Acidiphilium cryptum (strain JF-5).